The chain runs to 557 residues: Warthog protein 4 (557 aa).

The N-terminal stretch at 1-20 (MRFSLLALVLLSSSYKFTYG) is a signal peptide. A disordered region spans residues 272-308 (QETNPQPPPPPGQQGGFVQPQGFQPQGGFQPQGFQPQ). A compositionally biased stretch (low complexity) spans 287–308 (GFVQPQGFQPQGGFQPQGFQPQ).

The protein belongs to the hedgehog family. In terms of processing, the C-terminal domain displays an autoproteolysis activity.

It is found in the secreted. It localises to the cell surface. The protein resides in the cell membrane. Its subcellular location is the extracellular space. Intercellular signal essential for a variety of patterning events during development. This Caenorhabditis elegans protein is Warthog protein 4 (wrt-4).